The chain runs to 378 residues: tRNA-specific 2-thiouridylase MnmA (378 aa).

ATP contacts are provided by residues 6 to 13 (AMSGGVDS) and Leu32. Cys101 serves as the catalytic Nucleophile. Cysteines 101 and 199 form a disulfide. An ATP-binding site is contributed by Gly125. The interval 148–150 (KDQ) is interaction with tRNA. The active-site Cysteine persulfide intermediate is Cys199.

This sequence belongs to the MnmA/TRMU family.

The protein localises to the cytoplasm. It carries out the reaction S-sulfanyl-L-cysteinyl-[protein] + uridine(34) in tRNA + AH2 + ATP = 2-thiouridine(34) in tRNA + L-cysteinyl-[protein] + A + AMP + diphosphate + H(+). Catalyzes the 2-thiolation of uridine at the wobble position (U34) of tRNA, leading to the formation of s(2)U34. This Micrococcus luteus (strain ATCC 4698 / DSM 20030 / JCM 1464 / CCM 169 / CCUG 5858 / IAM 1056 / NBRC 3333 / NCIMB 9278 / NCTC 2665 / VKM Ac-2230) (Micrococcus lysodeikticus) protein is tRNA-specific 2-thiouridylase MnmA.